The sequence spans 509 residues: MGVSSRARWVALGLGVLGLLCAALGVIMILMVPSLIKQQVLKNVRIDPSSLSFGMWKEIPVPFYLSVYFFEVVNPSEVLNGQKPVVRERGPYVYREFRQKVNITFNDNDTVSYIENRSLRFQPDRSQGSESDYIVLPNILVLGGAVMMEDKPTSLKLLMTLGLVTMGQRAFMNRTVGEILWGYEDPFVNFLSKYFPDMFPIKGKFGLFVGMNDSSSGVFTVFTGVQNFSKIHLVDKWNGLSEVNYWHSEQCNMINGTAGQMWAPFMTPESSLEFFSPEACRSMKLTYQESRVFEGIPTYRFTAPDTLFANGSVYPPNEGFCPCRESGIQNVSTCRFGAPLFLSQPHFYNADPVLSEAVLGLNPDPKEHSLFLDIHPVTGIPMNCSVKMQLSLYIKSVKGVGQTGKIEPVVLPLLWFEQSGMMGGKTLNTFYTQLVLMPQVLHYAQYVLLGLGGLLLLVPIIYQLRSQEKCFLFWSGSKKGSQDKEAMQAYSESLMSPAAKGTVLQEAKL.

At 1 to 11 (MGVSSRARWVA) the chain is on the cytoplasmic side. A helical transmembrane segment spans residues 12-32 (LGLGVLGLLCAALGVIMILMV). Residues 33-440 (PSLIKQQVLK…YTQLVLMPQV (408 aa)) are Extracellular-facing. Residues asparagine 102, asparagine 108, asparagine 116, asparagine 173, asparagine 212, asparagine 227, asparagine 255, asparagine 310, asparagine 330, and asparagine 383 are each glycosylated (N-linked (GlcNAc...) asparagine). Cysteine 251 and cysteine 384 are disulfide-bonded. The chain crosses the membrane as a helical span at residues 441-461 (LHYAQYVLLGLGGLLLLVPII). Residues 462–509 (YQLRSQEKCFLFWSGSKKGSQDKEAMQAYSESLMSPAAKGTVLQEAKL) lie on the Cytoplasmic side of the membrane.

This sequence belongs to the CD36 family. The C-terminal region binds to PDZK1. N-glycosylated. Post-translationally, the six cysteines of the extracellular domain are all involved in intramolecular disulfide bonds.

It localises to the cell membrane. It is found in the membrane. Its subcellular location is the caveola. Its function is as follows. Receptor for different ligands such as phospholipids, cholesterol ester, lipoproteins, phosphatidylserine and apoptotic cells. Receptor for HDL, mediating selective uptake of cholesteryl ether and HDL-dependent cholesterol efflux. Also facilitates the flux of free and esterified cholesterol between the cell surface and apoB-containing lipoproteins and modified lipoproteins, although less efficiently than HDL. May be involved in the phagocytosis of apoptotic cells, via its phosphatidylserine binding activity. This Rattus norvegicus (Rat) protein is Scavenger receptor class B member 1 (Scarb1).